The following is a 172-amino-acid chain: Cold-inducible RNA-binding protein (172 aa).

An RRM domain is found at 6 to 84 (GKLFVGGLSF…RQIRVDQAGK (79 aa)). Positions 69–172 (GKSVDGRQIR…SYDSYATHNE (104 aa)) are disordered. Gly residues-rich tracts occupy residues 93-106 (YRGGSAGGRGFFRG) and 114-125 (FSRGGGDRGYGG). Phosphoserine is present on residues Ser130, Ser138, Ser146, Ser156, Ser159, and Ser163. Residues 138–172 (SRDYYSSRSQSGGYSDRSSGGSYRDSYDSYATHNE) are compositionally biased toward low complexity.

Interacts with EIF4G1. Associates with ribosomes. Post-translationally, methylated on arginine residues. Methylation of the RGG motifs is a prerequisite for recruitment into SGs. In terms of processing, phosphorylated by CK2, GSK3A and GSK3B. Phosphorylation by GSK3B increases RNA-binding activity to the TXN 3'-UTR transcript upon exposure to UV radiation.

Its subcellular location is the nucleus. The protein localises to the nucleoplasm. It localises to the cytoplasm. Its function is as follows. Cold-inducible mRNA binding protein that plays a protective role in the genotoxic stress response by stabilizing transcripts of genes involved in cell survival. Acts as a translational activator. Seems to play an essential role in cold-induced suppression of cell proliferation. Binds specifically to the 3'-untranslated regions (3'-UTRs) of stress-responsive transcripts RPA2 and TXN. Acts as a translational repressor. Promotes assembly of stress granules (SGs), when overexpressed. This chain is Cold-inducible RNA-binding protein (CIRBP), found in Pongo abelii (Sumatran orangutan).